Reading from the N-terminus, the 578-residue chain is Isocitrate dehydrogenase kinase/phosphatase (578 aa).

ATP is bound by residues 315–321 and Lys-336; that span reads APGIRGM. The active site involves Asp-371.

The protein belongs to the AceK family.

It localises to the cytoplasm. It catalyses the reaction L-seryl-[isocitrate dehydrogenase] + ATP = O-phospho-L-seryl-[isocitrate dehydrogenase] + ADP + H(+). In terms of biological role, bifunctional enzyme which can phosphorylate or dephosphorylate isocitrate dehydrogenase (IDH) on a specific serine residue. This is a regulatory mechanism which enables bacteria to bypass the Krebs cycle via the glyoxylate shunt in response to the source of carbon. When bacteria are grown on glucose, IDH is fully active and unphosphorylated, but when grown on acetate or ethanol, the activity of IDH declines drastically concomitant with its phosphorylation. The chain is Isocitrate dehydrogenase kinase/phosphatase from Escherichia coli O139:H28 (strain E24377A / ETEC).